Consider the following 83-residue polypeptide: Small ribosomal subunit protein bS16 (83 aa).

The protein belongs to the bacterial ribosomal protein bS16 family.

The chain is Small ribosomal subunit protein bS16 from Borrelia duttonii (strain Ly).